We begin with the raw amino-acid sequence, 377 residues long: Nitric oxide reductase FlRd-NAD(+) reductase (377 aa).

It belongs to the FAD-dependent oxidoreductase family. FAD serves as cofactor.

Its subcellular location is the cytoplasm. It catalyses the reaction 2 reduced [nitric oxide reductase rubredoxin domain] + NAD(+) + H(+) = 2 oxidized [nitric oxide reductase rubredoxin domain] + NADH. It participates in nitrogen metabolism; nitric oxide reduction. Functionally, one of at least two accessory proteins for anaerobic nitric oxide (NO) reductase. Reduces the rubredoxin moiety of NO reductase. The chain is Nitric oxide reductase FlRd-NAD(+) reductase from Salmonella gallinarum (strain 287/91 / NCTC 13346).